The sequence spans 375 residues: Killer cell immunoglobulin-like receptor 2DL5B (375 aa).

An N-terminal signal peptide occupies residues 1 to 21; it reads MSLMVVSMACVGFFLLQGAWT. Over 22–238 the chain is Extracellular; the sequence is HEGGQDKPLL…PSSKTGIRRH (217 aa). Ig-like C2-type domains are found at residues 42-102 and 137-200; these read GGHV…HPRS and GENV…LHDS. 2 disulfide bridges follow: Cys49–Cys95 and Cys144–Cys193. Residues 213 to 233 form a disordered region; that stretch reads VSVTGNSSSSSSSPTEPSSKT. Asn218 carries N-linked (GlcNAc...) asparagine glycosylation. A compositionally biased stretch (low complexity) spans 219-231; sequence SSSSSSSPTEPSS. A helical transmembrane segment spans residues 239–259; that stretch reads LHILIGTSVAIILFIILFFFL. At 260–375 the chain is on the cytoplasmic side; it reads LHCCCSNKKN…ASSHVPAAGI (116 aa). The segment at 334-375 is disordered; the sequence is AKPRSLSPAHKHHSQALRGSSRETTALSQNRVASSHVPAAGI. The segment covering 355-366 has biased composition (polar residues); that stretch reads RETTALSQNRVA.

This sequence belongs to the immunoglobulin superfamily.

It localises to the cell membrane. Functionally, receptor on natural killer (NK) cells for HLA-C alleles. Inhibits the activity of NK cells thus preventing cell lysis. The sequence is that of Killer cell immunoglobulin-like receptor 2DL5B (KIR2DL5B) from Homo sapiens (Human).